We begin with the raw amino-acid sequence, 341 residues long: MLFNPTGLTECLQEWEDLEKDYQQIQDTHRHYKHKLEEVSKLQESCSSSIARQRKKLKDLSESLEECKGAVNPEDVNKIDDIQESIKERPNVFFEMEAFLPKKNGLYLSLVLGNVNVTLLNKQSKFAYKDEYEKFKLYLTVLLLFFSFTCRFLVSYRVVDALFNFLLVWYYCTLTIRESILINNGSKIKGWWVFQHYVSTFLSGVMLTWPDGELYQMFRNQFLSYSMYINFVQFFQYYYQSGCLYRLRALGERHNMDLTVEGFQSWMWRGLTFLLPFLFLGHFFQLYNGITLFQMTQLPEWKEWQVLMCGSTFLVLFMGNFFTTLGVVYHKYMDQDKAKGL.

The Cytoplasmic portion of the chain corresponds to 1–131 (MLFNPTGLTE…KQSKFAYKDE (131 aa)). K129 contributes to the CoA binding site. The helical transmembrane segment at 132 to 151 (YEKFKLYLTVLLLFFSFTCR) threads the bilayer. Over 152-157 (FLVSYR) the chain is Extracellular. A helical transmembrane segment spans residues 158 to 176 (VVDALFNFLLVWYYCTLTI). The Cytoplasmic portion of the chain corresponds to 177–189 (RESILINNGSKIK). S186 and K187 together coordinate CoA. A helical membrane pass occupies residues 190–208 (GWWVFQHYVSTFLSGVMLT). The Extracellular segment spans residues 209-217 (WPDGELYQM). Residues 218 to 239 (FRNQFLSYSMYINFVQFFQYYY) traverse the membrane as a helical segment. Residues Q236, Y239, Q240, and H282 each coordinate CoA. At 240–269 (QSGCLYRLRALGERHNMDLTVEGFQSWMWR) the chain is on the cytoplasmic side. The chain crosses the membrane as a helical span at residues 270–293 (GLTFLLPFLFLGHFFQLYNGITLF). Residues 294–303 (QMTQLPEWKE) are Extracellular-facing. Residues 304 to 329 (WQVLMCGSTFLVLFMGNFFTTLGVVY) form a helical membrane-spanning segment. Topologically, residues 330–341 (HKYMDQDKAKGL) are cytoplasmic. K331 is a binding site for CoA.

It belongs to the TMEM120 family. Homodimer.

It localises to the cell membrane. Its subcellular location is the nucleus inner membrane. The protein resides in the endoplasmic reticulum. In terms of biological role, multifunctional protein involved in mechanosensation, and plays an essential role in lipid metabolism. May function as a potential ion channel involved in sensing mechanical stimuli. TMEM120A is structurally similar to a lipid-modifying enzyme, ELOVL7, and contains a bound coenzyme A molecule, which suggests it might function as an enzyme in lipid metabolism. This is Transmembrane protein 120A-A (tmem120aa) from Danio rerio (Zebrafish).